The chain runs to 131 residues: MAGVKALVALSFSGAIGLTFLMLGCALEDYGVYWPLFVLIFHAISPIPHFIAKRATYDSDATSSACRELAYFFTTGIVVSAFGFPVILARVSVIKWGACGLVLAGNAVIFLTIQGFFLVFGRGDDFSWEQW.

A run of 4 helical transmembrane segments spans residues 7 to 27, 32 to 52, 69 to 89, and 100 to 120; these read LVAL…GCAL, VYWP…HFIA, LAYF…VILA, and GLVL…FLVF.

It belongs to the OB-RGRP/VPS55 family. In terms of assembly, interacts with LEPR. Interacts with RAB13.

It is found in the golgi apparatus membrane. The protein localises to the endosome membrane. Negatively regulates leptin receptor (LEPR) cell surface expression, and thus decreases response to leptin/LEP. Negatively regulates growth hormone (GH) receptor cell surface expression in liver. May play a role in liver resistance to GH during periods of reduced nutrient availability. The sequence is that of Leptin receptor gene-related protein (LEPROT) from Bos taurus (Bovine).